A 121-amino-acid polypeptide reads, in one-letter code: Small ribosomal subunit protein uS13 (121 aa).

A disordered region spans residues 91 to 121 (HRRGLPVRGQNSKNNARTRKGPRRTVANKKK). A compositionally biased stretch (basic residues) spans 106–121 (ARTRKGPRRTVANKKK).

It belongs to the universal ribosomal protein uS13 family. Part of the 30S ribosomal subunit. Forms a loose heterodimer with protein S19. Forms two bridges to the 50S subunit in the 70S ribosome.

Located at the top of the head of the 30S subunit, it contacts several helices of the 16S rRNA. In the 70S ribosome it contacts the 23S rRNA (bridge B1a) and protein L5 of the 50S subunit (bridge B1b), connecting the 2 subunits; these bridges are implicated in subunit movement. Contacts the tRNAs in the A and P-sites. This is Small ribosomal subunit protein uS13 from Bacillus cereus (strain G9842).